The following is a 560-amino-acid chain: Dihydroxy-acid dehydratase (560 aa).

Position 52 (Cys-52) interacts with [2Fe-2S] cluster. Position 84 (Asp-84) interacts with Mg(2+). Cys-125 lines the [2Fe-2S] cluster pocket. Mg(2+)-binding residues include Asp-126 and Lys-127. The residue at position 127 (Lys-127) is an N6-carboxylysine. Cys-197 contacts [2Fe-2S] cluster. Glu-448 is a binding site for Mg(2+). Residue Ser-474 is the Proton acceptor of the active site.

The protein belongs to the IlvD/Edd family. As to quaternary structure, homodimer. The cofactor is [2Fe-2S] cluster. Mg(2+) serves as cofactor.

The enzyme catalyses (2R)-2,3-dihydroxy-3-methylbutanoate = 3-methyl-2-oxobutanoate + H2O. It catalyses the reaction (2R,3R)-2,3-dihydroxy-3-methylpentanoate = (S)-3-methyl-2-oxopentanoate + H2O. The protein operates within amino-acid biosynthesis; L-isoleucine biosynthesis; L-isoleucine from 2-oxobutanoate: step 3/4. It participates in amino-acid biosynthesis; L-valine biosynthesis; L-valine from pyruvate: step 3/4. Functions in the biosynthesis of branched-chain amino acids. Catalyzes the dehydration of (2R,3R)-2,3-dihydroxy-3-methylpentanoate (2,3-dihydroxy-3-methylvalerate) into 2-oxo-3-methylpentanoate (2-oxo-3-methylvalerate) and of (2R)-2,3-dihydroxy-3-methylbutanoate (2,3-dihydroxyisovalerate) into 2-oxo-3-methylbutanoate (2-oxoisovalerate), the penultimate precursor to L-isoleucine and L-valine, respectively. The protein is Dihydroxy-acid dehydratase of Francisella tularensis subsp. tularensis (strain WY96-3418).